Here is a 126-residue protein sequence, read N- to C-terminus: UPF0235 protein C15orf40 homolog (126 aa).

The disordered stretch occupies residues 1–32 (MPKKAGATSKGKNQTKEPETAPPAAGPVATDP). Serine 89 carries the post-translational modification Phosphoserine.

It belongs to the UPF0235 family.

In Mus musculus (Mouse), this protein is UPF0235 protein C15orf40 homolog.